Reading from the N-terminus, the 425-residue chain is Pre-mRNA-splicing factor PRP46 (425 aa).

WD repeat units lie at residues Gly-111–Thr-151, Gly-154–Asp-193, Gly-196–Thr-235, Gly-238–Thr-279, His-281–Asn-320, Glu-322–Lys-360, and Glu-371–Ser-410.

It belongs to the WD repeat PRL1/PRL2 family. As to quaternary structure, associated with the spliceosome.

The protein localises to the cytoplasm. It is found in the nucleus. In terms of biological role, involved in pre-mRNA splicing and required for cell cycle progression at G2/M. The sequence is that of Pre-mRNA-splicing factor PRP46 (PRP46) from Eremothecium gossypii (strain ATCC 10895 / CBS 109.51 / FGSC 9923 / NRRL Y-1056) (Yeast).